Here is a 115-residue protein sequence, read N- to C-terminus: Large ribosomal subunit protein bL20 (115 aa).

Belongs to the bacterial ribosomal protein bL20 family.

Binds directly to 23S ribosomal RNA and is necessary for the in vitro assembly process of the 50S ribosomal subunit. It is not involved in the protein synthesizing functions of that subunit. The protein is Large ribosomal subunit protein bL20 of Borrelia garinii subsp. bavariensis (strain ATCC BAA-2496 / DSM 23469 / PBi) (Borreliella bavariensis).